The sequence spans 462 residues: Kinetochore protein nsk1 (462 aa).

Polar residues predominate over residues 104–120 (PSKNHETSLSPSKSTID). 3 disordered regions span residues 104–161 (PSKN…CPGI), 180–240 (EKYG…PLRT), and 320–462 (NQLF…NIQS). The span at 121–138 (NNERKLDNEIDNYKHDVK) shows a compositional bias: basic and acidic residues. A compositionally biased stretch (polar residues) spans 146 to 156 (GKTSNPSQGTT). Residues 180–189 (EKYGKTDLGK) are compositionally biased toward basic and acidic residues. Residues 229 to 240 (KNRSSTFSPLRT) are compositionally biased toward polar residues. The span at 324–333 (KSEEEKDPVG) shows a compositional bias: basic and acidic residues. Residues 422–444 (WPQNLAKNNINSEPNTPTKSNID) are compositionally biased toward polar residues. A compositionally biased stretch (basic residues) spans 449–462 (HSARAHKTRKNIQS).

Interacts with dlc1. The dlc1-nsk1 complex seems to oligomerize in chain-like structures. Also binds directly to spindle microtubules. Post-translationally, phosphorylated by cdk1 at prometaphase arrest. Phosphorylation prevents nsk1 kinetochore and spindle targeting. Dephosphorylated by clp1 at anaphase onset controls its relocalization.

Its subcellular location is the nucleus. It is found in the nucleolus. The protein resides in the cytoplasm. The protein localises to the cytoskeleton. It localises to the spindle. Its subcellular location is the chromosome. It is found in the centromere. The protein resides in the kinetochore. Functionally, ensures chromosome alignment and accurate chromosome segregation during mitosis. Promotes proper kinetochore-microtubule (k-MT) interactions during anaphase B. The phosphorylation status of nsk1 affects the proper k-MT coupling, ensuring that it interacts stably only at the correct time during mitosis. This is Kinetochore protein nsk1 (nsk1) from Schizosaccharomyces pombe (strain 972 / ATCC 24843) (Fission yeast).